The sequence spans 170 residues: uncharacterized protein (170 aa).

This is an uncharacterized protein from Saccharomyces cerevisiae (strain ATCC 204508 / S288c) (Baker's yeast).